Reading from the N-terminus, the 492-residue chain is N-succinylglutamate 5-semialdehyde dehydrogenase (492 aa).

NAD(+) is bound at residue 220 to 225 (GSASTG). Catalysis depends on residues Glu243 and Cys277.

Belongs to the aldehyde dehydrogenase family. AstD subfamily.

It carries out the reaction N-succinyl-L-glutamate 5-semialdehyde + NAD(+) + H2O = N-succinyl-L-glutamate + NADH + 2 H(+). It participates in amino-acid degradation; L-arginine degradation via AST pathway; L-glutamate and succinate from L-arginine: step 4/5. Catalyzes the NAD-dependent reduction of succinylglutamate semialdehyde into succinylglutamate. The protein is N-succinylglutamate 5-semialdehyde dehydrogenase of Salmonella paratyphi B (strain ATCC BAA-1250 / SPB7).